Here is a 100-residue protein sequence, read N- to C-terminus: A-type ATP synthase subunit F (100 aa).

This sequence belongs to the V-ATPase F subunit family. As to quaternary structure, has multiple subunits with at least A(3), B(3), C, D, E, F, H, I and proteolipid K(x).

It is found in the cell membrane. Functionally, component of the A-type ATP synthase that produces ATP from ADP in the presence of a proton gradient across the membrane. This is A-type ATP synthase subunit F from Methanocorpusculum labreanum (strain ATCC 43576 / DSM 4855 / Z).